We begin with the raw amino-acid sequence, 93 residues long: Protein translocase subunit SecE (93 aa).

The segment at 1-33 is disordered; the sequence is MTDALGSIDMPDAEDETREKKARKGGKRGKKGP. Basic residues predominate over residues 20–33; it reads KKARKGGKRGKKGP. A helical transmembrane segment spans residues 64 to 84; sequence TVVIVFVVIMIGLVTVIDFGF.

The protein belongs to the SecE/SEC61-gamma family. Component of the Sec protein translocase complex. Heterotrimer consisting of SecY, SecE and SecG subunits. The heterotrimers can form oligomers, although 1 heterotrimer is thought to be able to translocate proteins. Interacts with the ribosome. Interacts with SecDF, and other proteins may be involved. Interacts with SecA.

It is found in the cell membrane. Functionally, essential subunit of the Sec protein translocation channel SecYEG. Clamps together the 2 halves of SecY. May contact the channel plug during translocation. In Streptomyces virginiae (Streptomyces cinnamonensis), this protein is Protein translocase subunit SecE.